The following is a 984-amino-acid chain: MORC family CW-type zinc finger protein 1 (984 aa).

Residues 284-353 (AFKDEVKKAE…RELKTARTLS (70 aa)) are a coiled coil. A CW-type zinc finger spans residues 477–531 (AMGIPFIIQCDLCLKWRVLPSSTNYQEKEFFDIWICANNPNRLENSCHQVECLPS). Positions 486, 489, 512, and 523 each coordinate Zn(2+). 2 coiled-coil regions span residues 737-761 (DVSLKQEKKEIPLLNQEKQELCNDV) and 900-934 (EISLGQCENKRKISEDKLKNLRIKLALLLQKLQLG).

It is found in the nucleus. Functionally, required for spermatogenesis. Essential for de novo DNA methylation and silencing of transposable elements in the male embryonic germ cells. The protein is MORC family CW-type zinc finger protein 1 of Homo sapiens (Human).